The sequence spans 1139 residues: MTQLAVPSPVAPTFPDLVEIQRESFLWFLREGFEEELLSFSPIIDYTGKLELHFLPEYRPGDPSKGYKINRPRYDPEEAKRRDATYQAQIRVPTRLINKETGEIKDMDVFIGELPLMTDRGTFIINGAERVIVNQIVRSPGVYYKSELDKNGRRTYSASLIPNRGAWLKFETDKNGLVWVRIDKTRKLSAAVLLKALGLSDSEIYDNLRHPEFFQKTMEKEGPYTEEEALMELYRKLRPGEPPTVSGGQQLLESRFFDPKRYDLGRVGRYKLNKKLNLNVAESVRVLTVTDILAVIDYLINLEYDIGHVDDIDHLGNRRVRSVGELLQNQVRVGLNRLERIIRERMTVSESENLTPASLVNPKPLVAAIKEFFGSSQLSQFMDQTNPLAELTHKRRLSALGPGGLSRERAGFAVRDIHPSHYGRICPIETPEGPNAGLIGSLATHARVNQYGFIESPYYRVENGVVRKDLGMVYLTADEEDEYRVAPGDVPVDAEGRITADLVPVRYRQEFTTAHPTEVHYVQVAPVQVISVATSLIPFLEHDDANRALMGANMQRQAVPLLKPDRPYVGTGLEAQAARDSGMVVVSRTNGVVTYVSADEIVVRPDDGGDPIVYRLQKYQRSNQDTCLNQRPLVYTGDRVVAGQVLADGPATEGGELALGQNVLVAYMPWEGYNYEDAILISERLVYDDVFTSVHIEKHEIEARQTKLGPEEITREIPNVGEDALRDLDENGIVRIGAWVEAGDILVGKVTPKGESDQPPEERLLRAIFGEKARDVRDNSLRVPNGERGRVVDVRIFTREQGDELPPGANMVVRVYIALKRKIQVGDKIAGRHGNKGIISRILPIEDMPYLADGTPVDVVLNPLGVPSRMNVGQVYECLLGWAAEHLGVRFKLMPFDEMHGLEASRLTVEAKLREAREKTGKDWIFNPEGKYCGKIQVFDGRTGEPFDQPVTVGRAYMLKLVHLVDDKIHARSTGPYSLVTQQPLGGKAQQGGQRFGEMEVWALEAFGAAYILQELLTVKSDDMVGRNEALNAIVKGKPIPRPGTPESFKVLVRELQSLCLDVSVHKVEVDSEGQTHDVEVDLMADTSNRHTPSRPTYESVTSEDLSPSPAFTRVLRTADANASRSLEEDEDEEEEEDF.

Positions 1085 to 1139 (ADTSNRHTPSRPTYESVTSEDLSPSPAFTRVLRTADANASRSLEEDEDEEEEEDF) are disordered. The segment covering 1086-1106 (DTSNRHTPSRPTYESVTSEDL) has biased composition (polar residues). Over residues 1128 to 1139 (EEDEDEEEEEDF) the composition is skewed to acidic residues.

The protein belongs to the RNA polymerase beta chain family. In terms of assembly, in cyanobacteria the RNAP catalytic core is composed of 2 alpha, 1 beta, 1 beta', 1 gamma and 1 omega subunit. When a sigma factor is associated with the core the holoenzyme is formed, which can initiate transcription.

It catalyses the reaction RNA(n) + a ribonucleoside 5'-triphosphate = RNA(n+1) + diphosphate. DNA-dependent RNA polymerase catalyzes the transcription of DNA into RNA using the four ribonucleoside triphosphates as substrates. The polypeptide is DNA-directed RNA polymerase subunit beta (Synechococcus sp. (strain JA-2-3B'a(2-13)) (Cyanobacteria bacterium Yellowstone B-Prime)).